We begin with the raw amino-acid sequence, 432 residues long: Carbohydrate esterase MZ0003 (432 aa).

Positions 1-25 (MQRTCVLIVLIVTSTMWTPDPDVYA) are cleaved as a signal peptide. Residues 266 to 271 (GHSRLG) carry the GXSYXG catalytic site motif motif. The active-site Nucleophile is Ser268. Lys272 and Trp359 together coordinate substrate. His409 functions as the Charge relay system in the catalytic mechanism.

The protein belongs to the carbohydrate esterase 15 (CE15) family. Does not require metal ions for activity. is required as a cofactor.

It is found in the periplasm. Its activity is regulated as follows. Is inhibited by PMSF and by NaF in vitro, which is consistent with the catalytic nucleophile being a serine. Displays some glucuronoyl esterase activity in vitro, since it is able to hydrolyze methyl 4-O-methyl-D-glucopyranosyluronate, allyl D-glucuronate, benzyl D-glucuronate and D-glucuronic acid methyl ester. However, esters of glucuronic acid are probably not its biological substrate, as they are not present in the marine environment. Can also hydrolyze a range of other esters, including p-nitrophenyl acetate. More likely biologically-relevant substrates for MZ0003 and other marine bacterial CE15s are algal cell wall polysaccharides, as these would be readily available in this environment and could be used as energy sources. The polypeptide is Carbohydrate esterase MZ0003 (Unknown prokaryotic organism).